Here is a 976-residue protein sequence, read N- to C-terminus: Ephrin type-A receptor 2 (976 aa).

The first 23 residues, 1–23, serve as a signal peptide directing secretion; that stretch reads MELWAARACFVLLWGCALAPATA. Residues 1–206 form a mediates interaction with CLDN4 region; sequence MELWAARACF…YYKKCPELLQ (206 aa). Topologically, residues 25–537 are extracellular; that stretch reads QGKEVVLLDF…SPEGSGSLAV (513 aa). In terms of domain architecture, Eph LBD spans 28 to 206; sequence EVVLLDFAAA…YYKKCPELLQ (179 aa). 2 disulfides stabilise this stretch: C70/C188 and C105/C115. Residues 328–432 form the Fibronectin type-III 1 domain; sequence PPSAPHYLTA…TSRSFRTASV (105 aa). N407 and N435 each carry an N-linked (GlcNAc...) asparagine glycan. The Fibronectin type-III 2 domain occupies 438 to 529; that stretch reads EPPKVRLEGR…KVHEFQTLSP (92 aa). A helical transmembrane segment spans residues 538–558; sequence IGGVAVCVVLLLLLAGAGFFI. Residues 559–976 are Cytoplasmic-facing; sequence HRRRKNLRAR…DQVNTVGIPI (418 aa). S570 carries the post-translational modification Phosphoserine. Y575 carries the post-translational modification Phosphotyrosine. S579 bears the Phosphoserine mark. At Y588 the chain carries Phosphotyrosine; by autocatalysis. A Phosphotyrosine modification is found at Y594. The mediates interaction with ARHGEF16 stretch occupies residues 606–906; sequence TEIHPSCVTR…STSGSEGVPF (301 aa). The Protein kinase domain occupies 613 to 875; sequence VTRQKVIGAG…DIVSILDKLI (263 aa). 619–627 is an ATP binding site; it reads IGAGEFGEV. Y628 carries the post-translational modification Phosphotyrosine. K646 is an ATP binding site. T647 bears the Phosphothreonine mark. Phosphotyrosine; by autocatalysis is present on Y735. The Proton acceptor role is filled by D739. Y772 is modified (phosphotyrosine). 4 positions are modified to phosphoserine: S869, S892, S897, and S901. Residues 886–976 form a negatively regulates interaction with ARHGEF16 region; the sequence is DFDPRVSIRL…DQVNTVGIPI (91 aa). Residues 904-968 enclose the SAM domain; it reads VPFRTVSEWL…AYSLLGLKDQ (65 aa). Y921 carries the post-translational modification Phosphotyrosine; by autocatalysis. Y930 carries the post-translational modification Phosphotyrosine. Positions 974-976 match the PDZ-binding motif; it reads IPI.

This sequence belongs to the protein kinase superfamily. Tyr protein kinase family. Ephrin receptor subfamily. As to quaternary structure, homodimer. Interacts with SLA. Interacts (phosphorylated form) with VAV2, VAV3 and PI3-kinase p85 subunit (PIK3R1, PIK3R2 or PIK3R3); critical for the EFNA1-induced activation of RAC1 which stimulates cell migration. Interacts with INPPL1; regulates activated EPHA2 endocytosis and degradation. Interacts (inactivated form) with PTK2/FAK1 and interacts (EFNA1 ligand-activated form) with PTPN11; regulates integrin-mediated adhesion. Interacts with ARHGEF16, DOCK4 and ELMO2; mediates ligand-independent activation of RAC1 which stimulates cell migration. Interacts with CLDN4; phosphorylates CLDN4 and may regulate tight junctions. Interacts with ACP1. Interacts with ANKS1A. Interacts with CEMIP. Interacts with NCK1; may regulate EPHA2 activity in cell migration and adhesion. Interacts with TIMD4. In terms of processing, autophosphorylates. Phosphorylated on tyrosine upon binding and activation by EFNA1. Phosphorylated residues Tyr-588 and Tyr-594 are required for binding VAV2 and VAV3 while phosphorylated residues Tyr-735 and Tyr-930 are required for binding PI3-kinase p85 subunit (PIK3R1, PIK3R2 or PIK3R3). These phosphorylated residues are critical for recruitment of VAV2 and VAV3 and PI3-kinase p85 subunit which transduce downstream signaling to activate RAC1 GTPase and cell migration. Dephosphorylation of Tyr-930 by PTPRF prevents the interaction of EPHA2 with NCK1. Phosphorylated at Ser-897 by PKB; serum-induced phosphorylation which targets EPHA2 to the cell leading edge and stimulates cell migration. Phosphorylation by PKB is inhibited by EFNA1-activated EPHA2 which regulates PKB activity via a reciprocal regulatory loop. Phosphorylated at Ser-897 in response to TNF by RPS6KA1 and RPS6KA3; RPS6KA-EPHA2 signaling pathway controls cell migration. Phosphorylated at Ser-897 by PKA; blocks cell retraction induced by EPHA2 kinase activity. Dephosphorylated by ACP1. Post-translationally, ubiquitinated by CHIP/STUB1. Ubiquitination is regulated by the HSP90 chaperone and regulates the receptor stability and activity through proteasomal degradation. ANKS1A prevents ubiquitination and degradation.

It is found in the cell membrane. Its subcellular location is the cell projection. It localises to the ruffle membrane. The protein localises to the lamellipodium membrane. The protein resides in the cell junction. It is found in the focal adhesion. The catalysed reaction is L-tyrosyl-[protein] + ATP = O-phospho-L-tyrosyl-[protein] + ADP + H(+). Functionally, receptor tyrosine kinase which binds promiscuously membrane-bound ephrin-A family ligands residing on adjacent cells, leading to contact-dependent bidirectional signaling into neighboring cells. The signaling pathway downstream of the receptor is referred to as forward signaling while the signaling pathway downstream of the ephrin ligand is referred to as reverse signaling. Activated by the ligand ephrin-A1/EFNA1 regulates migration, integrin-mediated adhesion, proliferation and differentiation of cells. Regulates cell adhesion and differentiation through DSG1/desmoglein-1 and inhibition of the ERK1/ERK2 signaling pathway. May also participate in UV radiation-induced apoptosis and have a ligand-independent stimulatory effect on chemotactic cell migration. During development, may function in distinctive aspects of pattern formation and subsequently in development of several fetal tissues. Involved for instance in angiogenesis, in early hindbrain development and epithelial proliferation and branching morphogenesis during mammary gland development. Engaged by the ligand ephrin-A5/EFNA5 may regulate lens fiber cells shape and interactions and be important for lens transparency development and maintenance. With ephrin-A2/EFNA2 may play a role in bone remodeling through regulation of osteoclastogenesis and osteoblastogenesis. The polypeptide is Ephrin type-A receptor 2 (EPHA2) (Macaca fascicularis (Crab-eating macaque)).